Consider the following 353-residue polypeptide: uncharacterized protein (353 aa).

The signal sequence occupies residues 1–30 (MHLRHLFSLRLRGSLLLGSLLVASSFSTQA).

This is an uncharacterized protein from Escherichia coli O157:H7.